A 718-amino-acid chain; its full sequence is MASGLAEESELSPGESELAVNPFDGLPFSSCYYELLEQRRALPIWAARFLFLEHLESSPTGVVLVSGDPGSGKSTQIPQWCAEFALARGFQTGQVTVTQPYPLAAMSLASRVADEMDLTLGHEIGYSIPQEDCTGPNTMLRFCWDRLFLQEVASTRGPGAWSVLILDEAQERSVASDLLQGLLRDTRLRNLPGDPRVVVVTDPALEPKFQAFWGNSPIVRVPREPGGDPTLAYKDTVPTDLVEAACQAVLELCQQEEAPGDVLVYLPSEEEISLCCESLSGEMGTLAVPGPPPRVLPLHPGCAQAIQTVYEDTDVSVRKIVVTHWLADFSFSLPSIQHVIDSGLELRSVYNPRIRAESQVLRPISKCQAEARLLRAKGFPPGSCLRLYSKSTLELEAPPLPHPKVCEENLSSLVLLLMRKQIAEPGECHFLDRPAPEALMRALEDLDYLAALNDDGELSDLGVILSEFPLPPELAKALLASCEFNCVDEMLTLAAMLTAAPGFTRPPLSAGEAALRRALEHADGDHSSLIQVYEAFVQSGADEAWCQARGLNWESLCQARKLRAELVELMQRIELPLSQPAFGSEQNRRDLQKALLSGYFLKVARDTDGTGNYLLLTHKHVAQLSPYCSYRNRRTPAQPPTWVLYHSFSISKDNCLCIVSEIQPEMLVELAPPYFLSNLPPSESRDLLNQLREGTAEPPAAATETSSPQEYGDGCVLQ.

Positions 54–222 constitute a Helicase ATP-binding domain; the sequence is HLESSPTGVV…WGNSPIVRVP (169 aa). Residue 67-74 participates in ATP binding; it reads GDPGSGKS. A DEAQ box motif is present at residues 167–170; that stretch reads DEAQ. Residues 245-447 enclose the Helicase C-terminal domain; sequence ACQAVLELCQ…ALMRALEDLD (203 aa). The interval 690–718 is disordered; it reads QLREGTAEPPAAATETSSPQEYGDGCVLQ. Positions 696-708 are enriched in low complexity; it reads AEPPAAATETSSP.

As to expression, ubiquitous.

It is found in the nucleus. Its function is as follows. Might be involved in RNA metabolism; it is missing helicase motif III and may not have helicase activity. In Mus musculus (Mouse), this protein is ATP-dependent RNA helicase homolog DQX1 (Dqx1).